Consider the following 499-residue polypeptide: Lysine--tRNA ligase (499 aa).

Positions 408 and 415 each coordinate Mg(2+).

It belongs to the class-II aminoacyl-tRNA synthetase family. Homodimer. Mg(2+) is required as a cofactor.

The protein resides in the cytoplasm. It catalyses the reaction tRNA(Lys) + L-lysine + ATP = L-lysyl-tRNA(Lys) + AMP + diphosphate. The sequence is that of Lysine--tRNA ligase from Bacillus cytotoxicus (strain DSM 22905 / CIP 110041 / 391-98 / NVH 391-98).